We begin with the raw amino-acid sequence, 274 residues long: Prolyl 4-hydroxylase 13 (274 aa).

The Cytoplasmic segment spans residues 1–10 (MRSYGKEKKL). Residues 11-31 (VFPYVFIACCFFLAIFGFCFF) form a helical; Signal-anchor for type II membrane protein membrane-spanning segment. Residues 32-274 (NLFSQGISFS…TKWIRDQTYD (243 aa)) are Lumenal-facing. Residues 151 to 270 (YYESFNILRY…KWVATKWIRD (120 aa)) enclose the Fe2OG dioxygenase domain. Positions 169 and 171 each coordinate Fe cation. N-linked (GlcNAc...) asparagine glycosylation is present at Asn-242. His-251 serves as a coordination point for Fe cation. 2-oxoglutarate is bound at residue Lys-261.

Belongs to the P4HA family. The cofactor is Fe(2+). Requires L-ascorbate as cofactor. In terms of tissue distribution, expressed in epidermal root hair cells (trichoblasts) root hairless cells (atrichoblasts).

The protein localises to the endoplasmic reticulum membrane. It catalyses the reaction L-prolyl-[collagen] + 2-oxoglutarate + O2 = trans-4-hydroxy-L-prolyl-[collagen] + succinate + CO2. In terms of biological role, catalyzes the post-translational formation of 4-hydroxyproline in -Xaa-Pro-Gly- sequences in proline-rich peptide sequences of plant glycoproteins and other proteins. Hydroxyprolines are important constituent of many plant cell wall glycoproteins such as extensins, hydroxyproline-rich glycoproteins, lectins and arabinogalactan proteins. Possesses high affinity for leucine-rich repeat and proline-rich extensins of root cell walls that are essential for root hair development. Hydroxyprolines define the subsequent O-glycosylation sites by arabinosyltransferases which elongate the O-arabinosides on extensins. The chain is Prolyl 4-hydroxylase 13 from Arabidopsis thaliana (Mouse-ear cress).